Consider the following 778-residue polypeptide: General transcription and DNA repair factor IIH helicase subunit XPD/RAD3 (778 aa).

A Helicase ATP-binding domain is found at 7–285 (DLPVLFPYPK…KVDSQKLQDE (279 aa)). 42 to 49 (MPSGTGKT) is an ATP binding site. [4Fe-4S] cluster is bound by residues Cys-115, Cys-133, Cys-156, and Cys-191. The short motif at 235 to 238 (DEAH) is the DEAH box element. The segment covering 750-765 (SRKDQGGFIENENKEG) has biased composition (basic and acidic residues). The interval 750–778 (SRKDQGGFIENENKEGEQDEDEDEDIEMQ) is disordered. Over residues 766-778 (EQDEDEDEDIEMQ) the composition is skewed to acidic residues.

This sequence belongs to the helicase family. RAD3/XPD subfamily. As to quaternary structure, component of the 7-subunit TFIIH core complex composed of XPB/SSL2, XPD/RAD3, SSL1, TFB1, TFB2, TFB4 and TFB5, which is active in NER. The core complex associates with the 3-subunit CTD-kinase module TFIIK composed of CCL1, KIN28 and TFB3 to form the 10-subunit holoenzyme (holo-TFIIH) active in transcription. An additionnal subunit, TFB6, plays a role in the dissociation of the SSL2 helicase from TFIIH after transcription initiation. Requires [4Fe-4S] cluster as cofactor. Mg(2+) is required as a cofactor.

The protein resides in the nucleus. The enzyme catalyses Couples ATP hydrolysis with the unwinding of duplex DNA at the replication fork by translocating in the 5'-3' direction. This creates two antiparallel DNA single strands (ssDNA). The leading ssDNA polymer is the template for DNA polymerase III holoenzyme which synthesizes a continuous strand.. The catalysed reaction is ATP + H2O = ADP + phosphate + H(+). ATP-dependent 5'-3' DNA helicase. Component of the general transcription and DNA repair factor IIH (TFIIH) core complex, which is involved in general and transcription-coupled nucleotide excision repair (NER) of damaged DNA and, when complexed to TFIIK, in RNA transcription by RNA polymerase II. In NER, TFIIH acts by opening DNA around the lesion to allow the excision of the damaged oligonucleotide and its replacement by a new DNA fragment. The ATP-dependent helicase activity of XPD/RAD3 is required for DNA opening. In transcription, TFIIH has an essential role in transcription initiation. When the pre-initiation complex (PIC) has been established, TFIIH is required for promoter opening and promoter escape. Phosphorylation of the C-terminal tail (CTD) of the largest subunit of RNA polymerase II by the kinase module TFIIK controls the initiation of transcription. XPD/RAD3 acts by forming a bridge between TFIIK and the core-TFIIH complex. Involved in the maintenance of the fidelity of DNA replication. Has single-stranded DNA-dependent ATPase activity. 5'-3' DNA helicase activity requires ATP (dATP partially substitutes), will unwind over 800 bp dsDNA. Able to unwind an RNA:DNA hybrid. The sequence is that of General transcription and DNA repair factor IIH helicase subunit XPD/RAD3 from Saccharomyces cerevisiae (strain ATCC 204508 / S288c) (Baker's yeast).